The following is a 214-amino-acid chain: RNA pyrophosphohydrolase (214 aa).

The Nudix hydrolase domain maps to 6–149 (GFRPNVGIIL…KRDVYQLALT (144 aa)). Residues 38–59 (GGIKYGETPMQAMYRELHEETG) carry the Nudix box motif.

Belongs to the Nudix hydrolase family. RppH subfamily. It depends on a divalent metal cation as a cofactor.

Its function is as follows. Accelerates the degradation of transcripts by removing pyrophosphate from the 5'-end of triphosphorylated RNA, leading to a more labile monophosphorylated state that can stimulate subsequent ribonuclease cleavage. The sequence is that of RNA pyrophosphohydrolase from Burkholderia cenocepacia (strain HI2424).